A 248-amino-acid chain; its full sequence is Large ribosomal subunit protein uL4 (248 aa).

Disordered stretches follow at residues 48-95 (GTHK…GPVP) and 210-248 (AFSE…RTGA). The span at 233-248 (DATKARSSRHDDRTGA) shows a compositional bias: basic and acidic residues.

The protein belongs to the universal ribosomal protein uL4 family. Part of the 50S ribosomal subunit.

Functionally, one of the primary rRNA binding proteins, this protein initially binds near the 5'-end of the 23S rRNA. It is important during the early stages of 50S assembly. It makes multiple contacts with different domains of the 23S rRNA in the assembled 50S subunit and ribosome. In terms of biological role, forms part of the polypeptide exit tunnel. The polypeptide is Large ribosomal subunit protein uL4 (Tropheryma whipplei (strain TW08/27) (Whipple's bacillus)).